We begin with the raw amino-acid sequence, 440 residues long: Protein FPV117 (440 aa).

Belongs to the poxviruses G5 family.

The protein is Protein FPV117 of Fowlpox virus (strain NVSL) (FPV).